Here is a 275-residue protein sequence, read N- to C-terminus: NH(3)-dependent NAD(+) synthetase (275 aa).

47 to 54 (GISGGQDS) provides a ligand contact to ATP. Position 53 (aspartate 53) interacts with Mg(2+). Arginine 141 lines the deamido-NAD(+) pocket. Threonine 161 provides a ligand contact to ATP. Glutamate 166 lines the Mg(2+) pocket. Lysine 174 and aspartate 181 together coordinate deamido-NAD(+). 2 residues coordinate ATP: lysine 190 and threonine 212. 261–262 (HK) is a deamido-NAD(+) binding site.

This sequence belongs to the NAD synthetase family. Homodimer.

It carries out the reaction deamido-NAD(+) + NH4(+) + ATP = AMP + diphosphate + NAD(+) + H(+). It participates in cofactor biosynthesis; NAD(+) biosynthesis; NAD(+) from deamido-NAD(+) (ammonia route): step 1/1. In terms of biological role, catalyzes the ATP-dependent amidation of deamido-NAD to form NAD. Uses ammonia as a nitrogen source. In Latilactobacillus sakei subsp. sakei (strain 23K) (Lactobacillus sakei subsp. sakei), this protein is NH(3)-dependent NAD(+) synthetase.